The following is a 309-amino-acid chain: Porphobilinogen deaminase (309 aa).

At C242 the chain carries S-(dipyrrolylmethanemethyl)cysteine.

It belongs to the HMBS family. Monomer. The cofactor is dipyrromethane.

The enzyme catalyses 4 porphobilinogen + H2O = hydroxymethylbilane + 4 NH4(+). It participates in porphyrin-containing compound metabolism; protoporphyrin-IX biosynthesis; coproporphyrinogen-III from 5-aminolevulinate: step 2/4. Functionally, tetrapolymerization of the monopyrrole PBG into the hydroxymethylbilane pre-uroporphyrinogen in several discrete steps. This is Porphobilinogen deaminase from Actinobacillus succinogenes (strain ATCC 55618 / DSM 22257 / CCUG 43843 / 130Z).